The chain runs to 177 residues: Adenine phosphoribosyltransferase (177 aa).

Belongs to the purine/pyrimidine phosphoribosyltransferase family. As to quaternary structure, homodimer.

Its subcellular location is the cytoplasm. It carries out the reaction AMP + diphosphate = 5-phospho-alpha-D-ribose 1-diphosphate + adenine. It participates in purine metabolism; AMP biosynthesis via salvage pathway; AMP from adenine: step 1/1. Catalyzes a salvage reaction resulting in the formation of AMP, that is energically less costly than de novo synthesis. The protein is Adenine phosphoribosyltransferase of Acidothermus cellulolyticus (strain ATCC 43068 / DSM 8971 / 11B).